Reading from the N-terminus, the 234-residue chain is Putative B3 domain-containing protein At2g18810 (234 aa).

The tract at residues 55–88 (CKNQDPEQNPNRVASSPSLCHVKSKRPQKGVSNK) is disordered. Positions 60–72 (PEQNPNRVASSPS) are enriched in polar residues. The TF-B3 DNA-binding region spans 87 to 185 (NKPILDMDFL…MLFFALVLSD (99 aa)).

Its subcellular location is the nucleus. The polypeptide is Putative B3 domain-containing protein At2g18810 (Arabidopsis thaliana (Mouse-ear cress)).